Reading from the N-terminus, the 419-residue chain is MWAGRVLHAALSRAPRESRAQSALAQLRGILEEELESIRGAGTWKSERVITSRQGPHIHVDGAPGGIINFCANNYLGLSSHPEVIQAGLRTLKEFGAGLSSVRFICGTQSIHKDLEAKIARFHQREDAILYPSCFDANTGLFEALLTSEDAVLSDELNHASIIDGIRLCKAHKYRYRHLDMADLEAKLQEAQKHRLRLVATDGAFSMDGDIAPLQEICRLASQYGALVFVDESHATGFLGATGRGTDELLGVMDQVTIINSTLGKALGGASGGYTTGPGALVSLLRQRARPYLFSNSLPPAAVGCASKALDLLMESNAIVQSMAAKTLRFRSQMEAAGFTISGANHPICPVMLGDARLALNIADDMLKRGIFVIGFSYPVVPKGKARIRVQISAVHSEEDIDRCVEAFVEVGRLHGALP.

A mitochondrion-targeting transit peptide spans 1–21; the sequence is MWAGRVLHAALSRAPRESRAQ. Residue Lys45 is modified to N6-acetyllysine; alternate. Lys45 carries the N6-succinyllysine; alternate modification. 134-135 is a pyridoxal 5'-phosphate binding site; sequence CF. Residue His159 participates in substrate binding. At Lys187 the chain carries N6-acetyllysine; alternate. Position 187 is an N6-succinyllysine; alternate (Lys187). Residues Ser206, 231 to 234, 262 to 265, and 295 to 296 contribute to the pyridoxal 5'-phosphate site; these read DESH, TLGK, and SN. N6-(pyridoxal phosphate)lysine is present on Lys265. N6-succinyllysine is present on residues Lys326 and Lys368. Lys383 carries the post-translational modification N6-acetyllysine; alternate. At Lys383 the chain carries N6-succinyllysine; alternate. Residue Arg389 coordinates substrate.

It belongs to the class-II pyridoxal-phosphate-dependent aminotransferase family. The cofactor is pyridoxal 5'-phosphate.

The protein resides in the mitochondrion. Its subcellular location is the nucleus. The catalysed reaction is glycine + acetyl-CoA = (2S)-2-amino-3-oxobutanoate + CoA. The protein operates within amino-acid degradation; L-threonine degradation via oxydo-reductase pathway; glycine from L-threonine: step 2/2. Pyridoxal phosphate (PLP) dependent enzyme, which catalyzes the cleavage of 2-amino-3-oxobutanoate to glycine and acetyl-CoA. Catalyzes the second reaction step on the main metabolic degradation pathway for L-threonine. This is 2-amino-3-ketobutyrate coenzyme A ligase, mitochondrial (GCAT) from Bos taurus (Bovine).